The chain runs to 400 residues: Lipase member N (400 aa).

The first 19 residues, 1–19 (MPMMWLFLTTACLIPGTLS), serve as a signal peptide directing secretion. The AB hydrolase-1 domain occupies 81–381 (PVVYMQHALF…DWNHFDFVWG (301 aa)). The active-site Nucleophile is the S175. A disulfide bridge connects residues C249 and C258. The N-linked (GlcNAc...) asparagine glycan is linked to N274. Active-site charge relay system residues include D346 and H375.

The protein belongs to the AB hydrolase superfamily. Lipase family. Highly expressed in the epidermis. Also detected in other tissues, although at much lower levels, including liver and kidney.

It is found in the secreted. It carries out the reaction a sterol ester + H2O = a sterol + a fatty acid + H(+). It catalyses the reaction a triacylglycerol + H2O = a 1,2-diacylglycerol + a fatty acid + H(+). The catalysed reaction is a triacylglycerol + H2O = a diacylglycerol + a fatty acid + H(+). The enzyme catalyses a cholesterol ester + H2O = cholesterol + a fatty acid + H(+). In terms of biological role, plays a highly specific role in the last step of keratinocyte differentiation. Contains two distinct domains: the alpha/beta hydrolase fold and the abhydrolase-associated lipase region, also features the consensus sequence of the active site of a genuine lipase. May have an essential function in lipid metabolism of the most differentiated epidermal layers. The chain is Lipase member N (Lipn) from Mus musculus (Mouse).